Consider the following 430-residue polypeptide: Enolase (430 aa).

Q163 is a (2R)-2-phosphoglycerate binding site. E205 functions as the Proton donor in the catalytic mechanism. Mg(2+) is bound by residues D242, E287, and D314. Residues K339, R368, S369, and K390 each coordinate (2R)-2-phosphoglycerate. Catalysis depends on K339, which acts as the Proton acceptor.

It belongs to the enolase family. Mg(2+) serves as cofactor.

It localises to the cytoplasm. It is found in the secreted. The protein resides in the cell surface. The enzyme catalyses (2R)-2-phosphoglycerate = phosphoenolpyruvate + H2O. The protein operates within carbohydrate degradation; glycolysis; pyruvate from D-glyceraldehyde 3-phosphate: step 4/5. Functionally, catalyzes the reversible conversion of 2-phosphoglycerate (2-PG) into phosphoenolpyruvate (PEP). It is essential for the degradation of carbohydrates via glycolysis. The polypeptide is Enolase (Listeria innocua serovar 6a (strain ATCC BAA-680 / CLIP 11262)).